The sequence spans 367 residues: MTDLYIGMMSGTSLDGVDAVLVRFDDAGRPEPQADHVVPYPDAVKQAVLALQPRGHDELHRAQTLANRLAEIYAQAARELLQKSGRRAEDIRAIACHGQTVRHAPHDGYTVQIGNMAKLAELAGIDVIADFRSRDVAAGGHGAPLVPAFQQGAFSSPDEKRVILNIGGISNIARLHAGQEAIGFDCGPGNMLMDAWCLRHTGQPFDEDGNWAAGGAVHPPLLAAMLAEPYLTQPPPKSTGRDLFDDEWLAGKLGALPSAPPPRDVQATLLAFSARGIADAILEHCPGNQAVYVCGGGARNGALMAEIARQLPGQRVAAIEALGLPAQLIEAIAFAWLGWRFDRRQAGNLPSVTGAQGPRVLGALYPR.

11 to 18 contributes to the ATP binding site; it reads GTSLDGVD.

Belongs to the anhydro-N-acetylmuramic acid kinase family.

The enzyme catalyses 1,6-anhydro-N-acetyl-beta-muramate + ATP + H2O = N-acetyl-D-muramate 6-phosphate + ADP + H(+). It functions in the pathway amino-sugar metabolism; 1,6-anhydro-N-acetylmuramate degradation. The protein operates within cell wall biogenesis; peptidoglycan recycling. Its function is as follows. Catalyzes the specific phosphorylation of 1,6-anhydro-N-acetylmuramic acid (anhMurNAc) with the simultaneous cleavage of the 1,6-anhydro ring, generating MurNAc-6-P. Is required for the utilization of anhMurNAc either imported from the medium or derived from its own cell wall murein, and thus plays a role in cell wall recycling. The protein is Anhydro-N-acetylmuramic acid kinase of Chromobacterium violaceum (strain ATCC 12472 / DSM 30191 / JCM 1249 / CCUG 213 / NBRC 12614 / NCIMB 9131 / NCTC 9757 / MK).